Consider the following 244-residue polypeptide: Protein TIFY 10b (244 aa).

One can recognise a Tify domain in the interval 97–132 (QEPEKRQLTIFYGGKVLVFNDFPADKAKGLMQLASK). Residues 185 to 210 (PIARKASLHRFLEKRKDRLNAKTPYQ) carry the Jas motif. Positions 187 to 194 (ARKASLHR) match the Nuclear localization signal motif. The disordered stretch occupies residues 193–244 (HRFLEKRKDRLNAKTPYQASPSDATPVKKEPESQPWLGLGPNAVVKPIERGQ). Basic and acidic residues predominate over residues 194–204 (RFLEKRKDRLN).

Belongs to the TIFY/JAZ family. In terms of processing, ubiquitinated. Targeted for degradation by the SCF(COI1) E3 ubiquitin ligase-proteasome pathway during jasmonate signaling.

The protein resides in the nucleus. Repressor of jasmonate responses. The chain is Protein TIFY 10b from Oryza sativa subsp. indica (Rice).